We begin with the raw amino-acid sequence, 422 residues long: MYKFRIQGSDKPLSGEVTISGAKNAALPILFASLLAEEPVEVANVPKLRDVDTTMELLKRLGAEVSRNGSVHIDASGVNDFCAPYDLVKTMRASIWALGPLVARFGKGQVSLPGGCAIGARPVDLHIHGLEQLGATIKLEEGYVKAEVDGRLKGAHIVMDKVSVGATITVMCAATLAEGTTVLENAAREPEIVDTANFLNAIGAKVSGMGTDTITIEGVERLGGGYHEVVADRIETGTFLVAAAVSGGKIVCKNTKAHLLEAVLAKLEEAGADVQTGDDWISLDMTGRELKAVNIRTAPHPAFPTDMQAQFTLLNMMAKGSGIITETIFENRFMHIPELQRMGAHAEIEGNTAICGDTDGLSGAQVMATDLRASASLVIAGCIAKGETIVDRIYHIARGYDKIEDKLTALGANIERVHSDDL.

Phosphoenolpyruvate is bound at residue 23–24 (KN). Arg-92 is a binding site for UDP-N-acetyl-alpha-D-glucosamine. The active-site Proton donor is Cys-116. Position 116 is a 2-(S-cysteinyl)pyruvic acid O-phosphothioketal (Cys-116). Residues 121 to 125 (RPVDL), 161 to 164 (KVSV), Asp-306, and Ile-328 contribute to the UDP-N-acetyl-alpha-D-glucosamine site.

It belongs to the EPSP synthase family. MurA subfamily.

It localises to the cytoplasm. It catalyses the reaction phosphoenolpyruvate + UDP-N-acetyl-alpha-D-glucosamine = UDP-N-acetyl-3-O-(1-carboxyvinyl)-alpha-D-glucosamine + phosphate. It functions in the pathway cell wall biogenesis; peptidoglycan biosynthesis. Its function is as follows. Cell wall formation. Adds enolpyruvyl to UDP-N-acetylglucosamine. The protein is UDP-N-acetylglucosamine 1-carboxyvinyltransferase of Aliivibrio fischeri (strain ATCC 700601 / ES114) (Vibrio fischeri).